The primary structure comprises 737 residues: Tripartite terminase subunit 3 (737 aa).

Residues valine 188–isoleucine 194 carry the Nuclear localization signal motif. A Walker A motif motif is present at residues valine 263–threonine 270. The short motif at leucine 357–glutamate 362 is the Walker B motif element. Glutamate 362 serves as the catalytic For ATPase activity. Residues aspartate 517, glutamate 589, and aspartate 712 each act as for nuclease activity in the active site.

It belongs to the herpesviridae TRM3 protein family. As to quaternary structure, interacts with the terminase subunits TRM1 and TRM2. Interacts with portal protein.

The protein resides in the host nucleus. In terms of biological role, component of the molecular motor that translocates viral genomic DNA in empty capsid during DNA packaging. Forms a tripartite terminase complex together with TRM1 and TRM2 in the host cytoplasm. Once the complex reaches the host nucleus, it interacts with the capsid portal vertex. This portal forms a ring in which genomic DNA is translocated into the capsid. TRM3 carries an RNase H-like nuclease activity that plays an important role for the cleavage of concatemeric viral DNA into unit length genomes. This Gallus gallus (Chicken) protein is Tripartite terminase subunit 3.